The primary structure comprises 416 residues: Serine hydroxymethyltransferase 1 (416 aa).

Residues Leu121 and 125–127 (GHL) contribute to the (6S)-5,6,7,8-tetrahydrofolate site. Lys229 is modified (N6-(pyridoxal phosphate)lysine). (6S)-5,6,7,8-tetrahydrofolate contacts are provided by residues Glu245 and 354-356 (SPF).

The protein belongs to the SHMT family. In terms of assembly, homodimer. The cofactor is pyridoxal 5'-phosphate.

Its subcellular location is the cytoplasm. The catalysed reaction is (6R)-5,10-methylene-5,6,7,8-tetrahydrofolate + glycine + H2O = (6S)-5,6,7,8-tetrahydrofolate + L-serine. Its pathway is one-carbon metabolism; tetrahydrofolate interconversion. It participates in amino-acid biosynthesis; glycine biosynthesis; glycine from L-serine: step 1/1. Functionally, catalyzes the reversible interconversion of serine and glycine with tetrahydrofolate (THF) serving as the one-carbon carrier. This reaction serves as the major source of one-carbon groups required for the biosynthesis of purines, thymidylate, methionine, and other important biomolecules. Also exhibits THF-independent aldolase activity toward beta-hydroxyamino acids, producing glycine and aldehydes, via a retro-aldol mechanism. In Vibrio vulnificus (strain CMCP6), this protein is Serine hydroxymethyltransferase 1.